The chain runs to 793 residues: Nuclear cap-binding protein subunit 1 (793 aa).

In terms of domain architecture, MIF4G spans 28–242 (EKKLQEVIGK…SLSAQIENLR (215 aa)).

This sequence belongs to the NCBP1 family. Component of the nuclear cap-binding complex (CBC), a heterodimer composed of ncbp-1 and ncbp-1 that interacts with m7GpppG-capped RNA.

The protein resides in the nucleus. In terms of biological role, component of the cap-binding complex (CBC), which binds cotranscriptionally to the 5'-cap of pre-mRNAs and is involved in various processes such as pre-mRNA splicing and RNA-mediated gene silencing (RNAi). The CBC complex is involved in miRNA-mediated RNA interference and is required for primary microRNAs (miRNAs) processing. In the CBC complex, ncbp-1 does not bind directly capped RNAs (m7GpppG-capped RNA) but is required to stabilize the movement of the N-terminal loop of ncbp-2 and lock the CBC into a high affinity cap-binding state with the cap structure. In Caenorhabditis briggsae, this protein is Nuclear cap-binding protein subunit 1 (ncbp-1).